The chain runs to 271 residues: DNA repair protein RecO (271 aa).

It belongs to the RecO family.

In terms of biological role, involved in DNA repair and RecF pathway recombination. This is DNA repair protein RecO from Synechococcus sp. (strain CC9311).